Reading from the N-terminus, the 115-residue chain is Histidine decarboxylase proenzyme (115 aa).

Residue S83 is modified to Pyruvic acid (Ser).

The proenzyme is a hexamer of identical pi chains; each pi chain monomer is cleaved to form a small (or beta) chain and a large (or alpha) chain by non-hydrolytic self-catalysis. Pyruvate is required as a cofactor.

The catalysed reaction is L-histidine + H(+) = histamine + CO2. The protein is Histidine decarboxylase proenzyme of Lentilactobacillus buchneri (Lactobacillus buchneri).